Reading from the N-terminus, the 449-residue chain is MGLWDVDKIEYVGRAKGPKEDFAFHYYDADKVVAGKKMKDWLRFGVAWWHTFNQELVDPFGTGTAHRPYYKYTDPMDQALAKVDYAFELFQKLGVEYFCFHDRDIAPEGDTLRETNANLDKVVDKIEENMKSTGVKLLWNTSSLFTNPRFVSGAATSPFADIYAYAGGQLKKSLEIGKRLGAENYVFWGGREGYENLWNTEMKRETDHIAKFFHMCADYAKEIGFEAQFLIEPKPKEPTLHQYDFDAATAIEFLRNHDLTDVFKLNLEGNHANLAGHTYQHEIRVARESGFLGSLDANQGDKLIGWDMDEFPTDLYETVAVMWEVLQAGSIGPHGGLNFDAKPRRTSFYEEDLFRSHIAGMDAYAAGLLVADKMNQDGFIQNLQAERYSSYDSGIGKDIDEGNVTLADLEAYSLDKPQSELIAATKSDHLESVKATINNYIIDALAEVE.

Catalysis depends on residues His-101 and Asp-104. Glu-232, Glu-268, His-271, Asp-296, Asp-307, Asp-309, and Asp-340 together coordinate Mg(2+).

The protein belongs to the xylose isomerase family. Homotetramer. Mg(2+) serves as cofactor.

It is found in the cytoplasm. The catalysed reaction is alpha-D-xylose = alpha-D-xylulofuranose. This is Xylose isomerase from Bifidobacterium longum (strain NCC 2705).